The chain runs to 507 residues: Maturase K (507 aa).

It belongs to the intron maturase 2 family. MatK subfamily.

Its subcellular location is the plastid. The protein resides in the chloroplast. Usually encoded in the trnK tRNA gene intron. Probably assists in splicing its own and other chloroplast group II introns. The protein is Maturase K of Magnolia champaca (Yellow jade orchid tree).